An 89-amino-acid chain; its full sequence is Albumin-1 (89 aa).

Residue alanine 1 is a signal peptide. Disulfide bonds link cysteine 4/cysteine 21, cysteine 8/cysteine 23, and cysteine 16/cysteine 33. Positions 39–46 (LSSVAKMI) are excised as a propeptide.

The C-terminal glycine may be removed from A1b.

Functionally, A1b binds to basic 7S globulin (BG) and stimulates its phosphorylation activity. The protein is Albumin-1 (LEG) of Vigna radiata var. radiata (Mung bean).